The chain runs to 497 residues: Protein root UVB sensitive 6 (497 aa).

This sequence belongs to the RUS1 family.

Its function is as follows. Required for normal embryo development. In Arabidopsis thaliana (Mouse-ear cress), this protein is Protein root UVB sensitive 6.